The chain runs to 174 residues: Centrosomal protein 20 (174 aa).

Residues 1-104 are necessary and sufficient for homooligomerization and localization to centrosomes and pericentriolar satellites; the sequence is MATVTELKAV…AFEESKDNSI (104 aa). Residues 49–81 enclose the LisH domain; the sequence is ENLLINELIREYLEFNKYKYTASVLIAESGQPV. The tract at residues 136–174 is disordered; it reads TKHLSWKPSRRPDDDHVRKDTGPRTTTEELPAAAQAVSR. A Phosphoserine modification is found at Ser144. Residues 145–157 are compositionally biased toward basic and acidic residues; the sequence is RRPDDDHVRKDTG.

It belongs to the CEP43 family. As to quaternary structure, homooligomer; probably required for localization to centrosomes. Forms a complex with KIAA0753/OFIP and OFD1; within this complex may stabilize the interaction between OFD1 and KIAA0753/OFIP. Interacts with PCM1; this interaction may be mediated by KIAA0753/OFIP.

The protein resides in the cytoplasm. Its subcellular location is the cytoskeleton. It is found in the microtubule organizing center. The protein localises to the centrosome. It localises to the centriole. The protein resides in the cell projection. Its subcellular location is the cilium. It is found in the cilium basal body. The protein localises to the cytoplasmic granule. It localises to the centriolar satellite. Its function is as follows. Involved in the biogenesis of cilia. Required for the recruitment of PLK1 to centrosomes and S phase progression. The sequence is that of Centrosomal protein 20 from Mus musculus (Mouse).